A 226-amino-acid chain; its full sequence is Cytidylate kinase (226 aa).

Position 12–20 (12–20) interacts with ATP; the sequence is GPSGAGKGT.

Belongs to the cytidylate kinase family. Type 1 subfamily.

The protein resides in the cytoplasm. It catalyses the reaction CMP + ATP = CDP + ADP. It carries out the reaction dCMP + ATP = dCDP + ADP. The polypeptide is Cytidylate kinase (Vibrio parahaemolyticus serotype O3:K6 (strain RIMD 2210633)).